Consider the following 314-residue polypeptide: Olfactory receptor 5P76 (314 aa).

Over 1–28 (MAFLEDGNHTAVTGFILLGLTDDPVLRV) the chain is Extracellular. N8 carries an N-linked (GlcNAc...) asparagine glycan. The helical transmembrane segment at 29–49 (VLFVIILCIYLVTVSGNLSTI) threads the bilayer. Residues 50-57 (LLIRVSSQ) are Cytoplasmic-facing. A helical membrane pass occupies residues 58–78 (LHHPMYFFLSHLASADIGYSS). The Extracellular segment spans residues 79 to 102 (SVTPNMLVNFLVERNTISYLGCGI). A disulfide bridge connects residues C100 and C192. Residues 103–123 (QLGSAVFFGTVECFLLAAMAY) form a helical membrane-spanning segment. Topologically, residues 124–136 (DRFIAICSPLLYS) are cytoplasmic. A helical transmembrane segment spans residues 137–157 (NKMSTQVCVQLLVGSYIGGFL). Topologically, residues 158-199 (NASSFTLSFFSLVFCGPNRVNHFFCDFAPLVKLSCSDVSVPA) are extracellular. A helical transmembrane segment spans residues 200–220 (VVPSFTAGSIIIVTIFVIAVS). The Cytoplasmic segment spans residues 221–240 (YIYILITILKMRSTEGRQKA). Residues 241–261 (FSTCTSHLTAVTLFYGTITFI) form a helical membrane-spanning segment. At 262-274 (YVMPKSSYSTDQN) the chain is on the extracellular side. Residues 275 to 295 (KVVSVFYMVVVPMLNPLIYSL) form a helical membrane-spanning segment. At 296–314 (RNKEIKGALKRQLAKNTFS) the chain is on the cytoplasmic side.

This sequence belongs to the G-protein coupled receptor 1 family.

The protein resides in the cell membrane. Its function is as follows. Potential odorant receptor. The sequence is that of Olfactory receptor 5P76 from Mus musculus (Mouse).